The chain runs to 198 residues: uncharacterized protein (198 aa).

The disordered stretch occupies residues 166–198 (GYEPDEKARKKRERVKRSEVEDQLKINVKPTRR).

This is an uncharacterized protein from Coxiella burnetii (strain RSA 493 / Nine Mile phase I).